Consider the following 259-residue polypeptide: Small ribosomal subunit protein eS1 (259 aa).

The segment covering 1 to 18 has biased composition (basic residues); sequence MAVGKNKRISKGKKGGKK. The segment at 1–22 is disordered; it reads MAVGKNKRISKGKKGGKKKASD.

Belongs to the eukaryotic ribosomal protein eS1 family. As to quaternary structure, component of the small ribosomal subunit. Mature ribosomes consist of a small (40S) and a large (60S) subunit. The 40S subunit contains about 33 different proteins and 1 molecule of RNA (18S). The 60S subunit contains about 49 different proteins and 3 molecules of RNA (25S, 5.8S and 5S).

Its subcellular location is the cytoplasm. The chain is Small ribosomal subunit protein eS1 from Chlamydomonas reinhardtii (Chlamydomonas smithii).